A 491-amino-acid polypeptide reads, in one-letter code: NADH-quinone oxidoreductase subunit N (491 aa).

The next 14 helical transmembrane spans lie at 6–26 (TLAP…INWI), 37–57 (VAYP…GMNA), 69–89 (LVVI…GLFV), 103–123 (MFAG…IVMI), 128–148 (FLTL…LVAL), 163–183 (FVLG…MYGA), 206–226 (LAFG…AAPF), 238–258 (PTAV…ALFI), 273–293 (QMML…TAIV), 301–321 (LAYS…SGVV), 335–355 (AMFY…IILL), 379–399 (FAFL…TVGF), 413–433 (GMTW…FYYL), and 458–478 (SMLS…AALM).

Belongs to the complex I subunit 2 family. As to quaternary structure, NDH-1 is composed of 14 different subunits. Subunits NuoA, H, J, K, L, M, N constitute the membrane sector of the complex.

The protein resides in the cell inner membrane. The enzyme catalyses a quinone + NADH + 5 H(+)(in) = a quinol + NAD(+) + 4 H(+)(out). Functionally, NDH-1 shuttles electrons from NADH, via FMN and iron-sulfur (Fe-S) centers, to quinones in the respiratory chain. The immediate electron acceptor for the enzyme in this species is believed to be ubiquinone. Couples the redox reaction to proton translocation (for every two electrons transferred, four hydrogen ions are translocated across the cytoplasmic membrane), and thus conserves the redox energy in a proton gradient. The protein is NADH-quinone oxidoreductase subunit N of Cupriavidus taiwanensis (strain DSM 17343 / BCRC 17206 / CCUG 44338 / CIP 107171 / LMG 19424 / R1) (Ralstonia taiwanensis (strain LMG 19424)).